Consider the following 374-residue polypeptide: Heptahelical transmembrane protein 5 (374 aa).

Residues 1–79 (MGDEAEIKEH…LSIFTIHNET (79 aa)) lie on the Cytoplasmic side of the membrane. Residues 80-100 (LNVWTHLIGFFLFLALTIYTA) traverse the membrane as a helical segment. Topologically, residues 101 to 191 (TKVPSVVDLH…LIFRPITRWP (91 aa)) are extracellular. A helical membrane pass occupies residues 192 to 212 (FYAFLGGAIFCLLASSTCHLL). Residues 213-228 (SCHSERVSYIMLRLDY) lie on the Cytoplasmic side of the membrane. The helical transmembrane segment at 229–249 (AGIAALIATSFYPPVYYSFMC) threads the bilayer. Residues 250 to 256 (DPFFCNL) lie on the Extracellular side of the membrane. The helical transmembrane segment at 257 to 277 (YLGFITILGIATVLVSLLPVF) threads the bilayer. The Cytoplasmic portion of the chain corresponds to 278 to 288 (QSLEFRVVRAS). The chain crosses the membrane as a helical span at residues 289-309 (LFFGMGFSGLAPILHKLIIFW). At 310–313 (DQPE) the chain is on the extracellular side. Residues 314–334 (ALHMTGYEILMGLLYGLGAVV) traverse the membrane as a helical segment. Residues 335–347 (YATRIPERWMPGK) are Cytoplasmic-facing. The chain crosses the membrane as a helical span at residues 348–368 (FDIAGHSHQLFHVLVVAGALT). The Extracellular segment spans residues 369–374 (HYRAGL).

This sequence belongs to the ADIPOR family. As to expression, expressed in roots, leaves, stems and flowers.

It is found in the membrane. In terms of biological role, may play a role in abiotic stress response. The polypeptide is Heptahelical transmembrane protein 5 (HHP5) (Arabidopsis thaliana (Mouse-ear cress)).